We begin with the raw amino-acid sequence, 468 residues long: ATP synthase subunit beta (468 aa).

Position 155 to 162 (155 to 162 (GGAGVGKT)) interacts with ATP.

This sequence belongs to the ATPase alpha/beta chains family. As to quaternary structure, F-type ATPases have 2 components, CF(1) - the catalytic core - and CF(0) - the membrane proton channel. CF(1) has five subunits: alpha(3), beta(3), gamma(1), delta(1), epsilon(1). CF(0) has three main subunits: a(1), b(2) and c(9-12). The alpha and beta chains form an alternating ring which encloses part of the gamma chain. CF(1) is attached to CF(0) by a central stalk formed by the gamma and epsilon chains, while a peripheral stalk is formed by the delta and b chains.

It localises to the cell membrane. The enzyme catalyses ATP + H2O + 4 H(+)(in) = ADP + phosphate + 5 H(+)(out). Its function is as follows. Produces ATP from ADP in the presence of a proton gradient across the membrane. The catalytic sites are hosted primarily by the beta subunits. This Streptococcus pneumoniae (strain ATCC BAA-255 / R6) protein is ATP synthase subunit beta.